We begin with the raw amino-acid sequence, 469 residues long: uncharacterized protein (469 aa).

This is an uncharacterized protein from Treponema pallidum (strain Nichols).